We begin with the raw amino-acid sequence, 196 residues long: ATP-dependent Clp protease proteolytic subunit (196 aa).

Ser101 serves as the catalytic Nucleophile. Residue His126 is part of the active site.

It belongs to the peptidase S14 family. As to quaternary structure, component of the chloroplastic Clp protease core complex.

It is found in the plastid. It localises to the chloroplast stroma. The catalysed reaction is Hydrolysis of proteins to small peptides in the presence of ATP and magnesium. alpha-casein is the usual test substrate. In the absence of ATP, only oligopeptides shorter than five residues are hydrolyzed (such as succinyl-Leu-Tyr-|-NHMec, and Leu-Tyr-Leu-|-Tyr-Trp, in which cleavage of the -Tyr-|-Leu- and -Tyr-|-Trp bonds also occurs).. Functionally, cleaves peptides in various proteins in a process that requires ATP hydrolysis. Has a chymotrypsin-like activity. Plays a major role in the degradation of misfolded proteins. This is ATP-dependent Clp protease proteolytic subunit from Gossypium hirsutum (Upland cotton).